Here is a 355-residue protein sequence, read N- to C-terminus: UDP-N-acetylglucosamine--N-acetylmuramyl-(pentapeptide) pyrophosphoryl-undecaprenol N-acetylglucosamine transferase (355 aa).

UDP-N-acetyl-alpha-D-glucosamine is bound by residues 15-17, Asn127, Arg163, Ser191, Ile244, 263-268, and Gln288; these read TGG and ALTVSE.

It belongs to the glycosyltransferase 28 family. MurG subfamily.

The protein localises to the cell inner membrane. The catalysed reaction is di-trans,octa-cis-undecaprenyl diphospho-N-acetyl-alpha-D-muramoyl-L-alanyl-D-glutamyl-meso-2,6-diaminopimeloyl-D-alanyl-D-alanine + UDP-N-acetyl-alpha-D-glucosamine = di-trans,octa-cis-undecaprenyl diphospho-[N-acetyl-alpha-D-glucosaminyl-(1-&gt;4)]-N-acetyl-alpha-D-muramoyl-L-alanyl-D-glutamyl-meso-2,6-diaminopimeloyl-D-alanyl-D-alanine + UDP + H(+). The protein operates within cell wall biogenesis; peptidoglycan biosynthesis. Its function is as follows. Cell wall formation. Catalyzes the transfer of a GlcNAc subunit on undecaprenyl-pyrophosphoryl-MurNAc-pentapeptide (lipid intermediate I) to form undecaprenyl-pyrophosphoryl-MurNAc-(pentapeptide)GlcNAc (lipid intermediate II). This Sodalis glossinidius (strain morsitans) protein is UDP-N-acetylglucosamine--N-acetylmuramyl-(pentapeptide) pyrophosphoryl-undecaprenol N-acetylglucosamine transferase.